We begin with the raw amino-acid sequence, 275 residues long: Pantothenate synthetase (275 aa).

Position 26–33 (Met-26–His-33) interacts with ATP. His-33 acts as the Proton donor in catalysis. Gln-57 provides a ligand contact to (R)-pantoate. Beta-alanine is bound at residue Gln-57. Gly-143–Asp-146 contacts ATP. Residue Gln-149 coordinates (R)-pantoate. ATP-binding positions include Ala-172 and Arg-180–Arg-183.

Belongs to the pantothenate synthetase family. In terms of assembly, homodimer.

Its subcellular location is the cytoplasm. The enzyme catalyses (R)-pantoate + beta-alanine + ATP = (R)-pantothenate + AMP + diphosphate + H(+). The protein operates within cofactor biosynthesis; (R)-pantothenate biosynthesis; (R)-pantothenate from (R)-pantoate and beta-alanine: step 1/1. Functionally, catalyzes the condensation of pantoate with beta-alanine in an ATP-dependent reaction via a pantoyl-adenylate intermediate. In Gluconobacter oxydans (strain 621H) (Gluconobacter suboxydans), this protein is Pantothenate synthetase.